The primary structure comprises 433 residues: O-methyltransferase aclM (433 aa).

The stretch at 5–37 (LTDAERTALQTSLEALNRQVEATRNILRSNSQK) forms a coiled coil. S-adenosyl-L-methionine is bound by residues D277 and 311–313 (GDF). The Proton acceptor role is filled by H330.

The protein belongs to the class I-like SAM-binding methyltransferase superfamily. Cation-independent O-methyltransferase family. COMT subfamily.

It participates in mycotoxin biosynthesis. Its function is as follows. O-methyltransferase; part of the gene cluster that mediates the biosynthesis of aspirochlorine (or antibiotic A30641), an unusual halogenated spiro compound with distinctive antifungal properties due to selective inhibition of protein biosynthesis, and which is also active against bacteria, viruses, and murine tumor cells. The non-ribosomal peptide synthetase (NRPS) aclP is responsible the formation of the diketopiperazine (DKP) core from the condensation of 2 phenylalanine residues. One Phe residue is tailored into chlorotyrosine by hydroxylation and chlorination, whereas the second Phe undergoes an unprecedented C-C bond cleavage to be converted into glycine. After formation of the DKP, sulfur is incorporated into the DKP by conjugation with glutathione by aclG, followed by its stepwise degradation to the thiol by aclI, aclJ and aclK, and the dithiol oxidation by aclT. In addition, oxygenases (aclB, aclC, aclL and aclO) and O-methyltransferases (aclM and aclU) act as tailoring enzymes to produce the intermediate dechloroaspirochlorine. Ultimately, chlorination of dechloroaspirochlorine by the halogenase aclH is the last step in the aspirochlorine pathway. In Aspergillus oryzae (strain ATCC 42149 / RIB 40) (Yellow koji mold), this protein is O-methyltransferase aclM.